We begin with the raw amino-acid sequence, 600 residues long: Mitoguardin 1 (600 aa).

2 helical membrane passes run 15–32 (TYAV…YSLS) and 38–58 (PVAK…IFLA). 2 positions are modified to phosphoserine: serine 257 and serine 261.

This sequence belongs to the mitoguardin family. Homodimer and heterodimer; forms heterodimers with MIGA2. Interacts with PLD6/MitoPLD.

It localises to the mitochondrion outer membrane. Regulator of mitochondrial fusion. Acts by forming homo- and heterodimers at the mitochondrial outer membrane and facilitating the formation of PLD6/MitoPLD dimers. May act by regulating phospholipid metabolism via PLD6/MitoPLD. The protein is Mitoguardin 1 of Mus musculus (Mouse).